The primary structure comprises 197 residues: Imidazoleglycerol-phosphate dehydratase (197 aa).

The protein belongs to the imidazoleglycerol-phosphate dehydratase family.

It localises to the cytoplasm. The catalysed reaction is D-erythro-1-(imidazol-4-yl)glycerol 3-phosphate = 3-(imidazol-4-yl)-2-oxopropyl phosphate + H2O. The protein operates within amino-acid biosynthesis; L-histidine biosynthesis; L-histidine from 5-phospho-alpha-D-ribose 1-diphosphate: step 6/9. In Thermobifida fusca (strain YX), this protein is Imidazoleglycerol-phosphate dehydratase.